The following is a 204-amino-acid chain: Large ribosomal subunit protein eL15 (204 aa).

It belongs to the eukaryotic ribosomal protein eL15 family. As to quaternary structure, component of the large ribosomal subunit.

The protein resides in the cytoplasm. In terms of biological role, component of the large ribosomal subunit. The ribosome is a large ribonucleoprotein complex responsible for the synthesis of proteins in the cell. This is Large ribosomal subunit protein eL15 (rpl15) from Hypophthalmichthys nobilis (Bighead carp).